Reading from the N-terminus, the 368-residue chain is tRNA-specific 2-thiouridylase MnmA (368 aa).

Residues 11-18 and Met-37 contribute to the ATP site; that span reads GMSGGVDS. The tract at residues 97–99 is interaction with target base in tRNA; sequence NPD. Residue Cys-102 is the Nucleophile of the active site. Cys-102 and Cys-199 are disulfide-bonded. Position 127 (Gly-127) interacts with ATP. The interval 149–151 is interaction with tRNA; that stretch reads KDQ. Cys-199 (cysteine persulfide intermediate) is an active-site residue. Positions 311-312 are interaction with tRNA; that stretch reads RY.

It belongs to the MnmA/TRMU family. In terms of assembly, interacts with TusE.

The protein resides in the cytoplasm. It carries out the reaction S-sulfanyl-L-cysteinyl-[protein] + uridine(34) in tRNA + AH2 + ATP = 2-thiouridine(34) in tRNA + L-cysteinyl-[protein] + A + AMP + diphosphate + H(+). Functionally, catalyzes the 2-thiolation of uridine at the wobble position (U34) of tRNA(Lys), tRNA(Glu) and tRNA(Gln), leading to the formation of s(2)U34, the first step of tRNA-mnm(5)s(2)U34 synthesis. Sulfur is provided by IscS, via a sulfur-relay system. Binds ATP and its substrate tRNAs. In Escherichia coli O139:H28 (strain E24377A / ETEC), this protein is tRNA-specific 2-thiouridylase MnmA.